The primary structure comprises 67 residues: AKEGYLVNIYTGCKYSCWLLGENEYCIAECKEIGAGYGYCHGFGCWCEQFPENKPSYPYPEKSCGRK.

A1 is a signal peptide. Residues 2-65 (KEGYLVNIYT…SYPYPEKSCG (64 aa)) enclose the LCN-type CS-alpha/beta domain. Cystine bridges form between C13/C64, C17/C40, C26/C45, and C30/C47. C64 is modified (cysteine amide). A propeptide spanning residues 65–67 (GRK) is cleaved from the precursor.

This sequence belongs to the long (4 C-C) scorpion toxin superfamily. Sodium channel inhibitor family. Beta subfamily. Expressed by the venom gland.

The protein localises to the secreted. Functionally, beta toxins bind voltage-independently at site-4 of sodium channels (Nav) and shift the voltage of activation toward more negative potentials thereby affecting sodium channel activation and promoting spontaneous and repetitive firing. The chain is Toxin Cex8 from Centruroides exilicauda (Bark scorpion).